A 78-amino-acid polypeptide reads, in one-letter code: Delta-conotoxin-like S6.8 (78 aa).

Residues 1–22 form the signal peptide; it reads MKLTCMMIVAVLFLTAWTFVTA. A propeptide spanning residues 23 to 53 is cleaved from the precursor; the sequence is DDSRNGLKNLFPKARHEMKNPDASKLNKRDG. Disulfide bonds link Cys-54/Cys-69, Cys-61/Cys-73, and Cys-68/Cys-77.

The protein belongs to the conotoxin O1 superfamily. As to expression, expressed by the venom duct.

The protein localises to the secreted. Its function is as follows. Delta-conotoxins bind to site 6 of voltage-gated sodium channels (Nav) and inhibit the inactivation process. The sequence is that of Delta-conotoxin-like S6.8 from Conus striatus (Striated cone).